Reading from the N-terminus, the 551-residue chain is MSDIAITISLLALVAVIGLWIGHWKIRGVGLGIGGVLFGGIIVAHFTDQYGLKLDAHTLHFVQEFGLILFVYTIGIQVGPGFFSSLRKSGLKLNAFAILIIVLGSIAVVLVHKIADVPLDIALGIYSGAVTNTPALGAGQQILAELGVPQTTVTMGVSYAMAYPFGICGILLAMWLIRLFFNVKVDDEAARFNAESSQDKESLHNISLKVTNQNLDGLTLIQIPGFSDEEVVCSRLKRDDMEIVPKASTEIRTNDILQLVGDDNSLAKMRLIIGYEVDAPTVAYSGEIRSERVVVTNEKVLGKKIRALGIHQKYGVVISRLNRAGIELVPTGNTTLQFGDVLHMVGRSDVLNQAISVIGNAQQKLLQVQMLPVFIGIGLGVLVGSIPFYIPGFPVALKLGLAGGPLVVVLILARIGTIGKLYWFMPPSANLALREIGIVLFLAVVGLKSGGSFFDTLVNGSGLEWMGYGIFITFVPLIIAGTIARLYGKLNYLTICGLLAGSMTDPPALAFANEIKEDNGAAALSYATVYPLVMFLRIMSPQLLAVLLWAA.

The next 5 helical transmembrane spans lie at 4–24 (IAIT…IGHW), 28–48 (GVGL…HFTD), 65–85 (FGLI…FFSS), 95–115 (AFAI…HKIA), and 157–177 (VSYA…MWLI). 2 consecutive RCK C-terminal domains span residues 191-275 (RFNA…IIGY) and 277-360 (VDAP…VIGN). Helical transmembrane passes span 370-390 (MLPV…PFYI), 402-424 (AGGP…LYWF), 438-458 (IVLF…DTLV), 463-483 (LEWM…AGTI), 492-512 (YLTI…LAFA), and 529-549 (VYPL…VLLW).

It belongs to the AAE transporter (TC 2.A.81) family. YidE subfamily.

The protein resides in the cell membrane. This is Putative transport protein CGSHiEE_03135 from Haemophilus influenzae (strain PittEE).